The sequence spans 335 residues: Acetyl-coenzyme A carboxylase carboxyl transferase subunit alpha (335 aa).

Positions 40 to 294 (QLETLATRRR…KEAIEKHLDT (255 aa)) constitute a CoA carboxyltransferase C-terminal domain.

It belongs to the AccA family. In terms of assembly, acetyl-CoA carboxylase is a heterohexamer composed of biotin carboxyl carrier protein (AccB), biotin carboxylase (AccC) and two subunits each of ACCase subunit alpha (AccA) and ACCase subunit beta (AccD).

The protein resides in the cytoplasm. It carries out the reaction N(6)-carboxybiotinyl-L-lysyl-[protein] + acetyl-CoA = N(6)-biotinyl-L-lysyl-[protein] + malonyl-CoA. The protein operates within lipid metabolism; malonyl-CoA biosynthesis; malonyl-CoA from acetyl-CoA: step 1/1. Component of the acetyl coenzyme A carboxylase (ACC) complex. First, biotin carboxylase catalyzes the carboxylation of biotin on its carrier protein (BCCP) and then the CO(2) group is transferred by the carboxyltransferase to acetyl-CoA to form malonyl-CoA. The sequence is that of Acetyl-coenzyme A carboxylase carboxyl transferase subunit alpha from Prochlorococcus marinus (strain MIT 9312).